A 271-amino-acid chain; its full sequence is MNRIQQTFAALAEQGRKGLIPFITAGDPDPAKTVEFMHALAEGGADVIELGVPFSDPMADGPVIQRSSERALARGVTLKSVLADVKRFRDTNQTTPVVLMGYANPIERMGVDAFATEAQAAGVDGVLVVDYPPEEAGVFAEKMRAAQIDPIFLLAPTSTDERIADVGKIASGYVYYVSLKGVTGAGNLDVSSIAGKIPAIKSRVPVPVGVGFGIRDAETARAVAEVSDAVVIGSRLVQLLESAAPEGAAAALKTFIAELRAALDGAGKTAR.

Active-site proton acceptor residues include E49 and D60.

The protein belongs to the TrpA family. As to quaternary structure, tetramer of two alpha and two beta chains.

The catalysed reaction is (1S,2R)-1-C-(indol-3-yl)glycerol 3-phosphate + L-serine = D-glyceraldehyde 3-phosphate + L-tryptophan + H2O. Its pathway is amino-acid biosynthesis; L-tryptophan biosynthesis; L-tryptophan from chorismate: step 5/5. Functionally, the alpha subunit is responsible for the aldol cleavage of indoleglycerol phosphate to indole and glyceraldehyde 3-phosphate. The sequence is that of Tryptophan synthase alpha chain from Burkholderia ambifaria (strain MC40-6).